Reading from the N-terminus, the 364-residue chain is MAANYWESTQRKHWQFTKQDLAAIRQRLDDEDPGLVQMFPLPQLRHLNIYFNQQINRLSKRIGLRQQVMATAQVYLKRFYTRIAIRQTNPYLVLTTVLYLACKMEECPQHIRMMTQEARSLWPSDLHGHDPARVGECEFSLISEMHSNLIVHQPYRSLLGVQDEFGLTQDEMSLAWTVINDHYMTDLPLLHPPHVVALTAVLLALVLRPSANTPAAGGAGGNAGAAAAAAAAGAGGVAMAATALAQAQAQVQARAAAIAAAGAGGGTPGFGSQGSQQQAGFSQGNSQGSLQGDSAAAEPKKVTDPRLAKVQRFAAWLADSNIDIEAMVDCTQELISFYECHEQYNDKHTKEQISRFIKARNLDK.

The Cyclin N-terminal domain maps to 53–143 (QQINRLSKRI…VGECEFSLIS (91 aa)). The disordered stretch occupies residues 268 to 303 (PGFGSQGSQQQAGFSQGNSQGSLQGDSAAAEPKKVT). A compositionally biased stretch (low complexity) spans 273 to 289 (QGSQQQAGFSQGNSQGS).

The protein belongs to the cyclin family. Cyclin C subfamily. Component of the SRB8-11 complex, a regulatory module of the Mediator complex.

It is found in the nucleus. Functionally, component of the SRB8-11 complex. The SRB8-11 complex is a regulatory module of the Mediator complex which is itself involved in regulation of basal and activated RNA polymerase II-dependent transcription. The SRB8-11 complex may be involved in the transcriptional repression of a subset of genes regulated by Mediator. It may inhibit the association of the Mediator complex with RNA polymerase II to form the holoenzyme complex. The SRB8-11 complex phosphorylates the C-terminal domain (CTD) of the largest subunit of RNA polymerase II. This Chaetomium globosum (strain ATCC 6205 / CBS 148.51 / DSM 1962 / NBRC 6347 / NRRL 1970) (Soil fungus) protein is RNA polymerase II holoenzyme cyclin-like subunit (SSN8).